Consider the following 146-residue polypeptide: Hemoglobin subunit beta (146 aa).

Position 1 is an N-acetylvaline (V1). The Globin domain maps to 2–146 (HLSGEEKTAL…VANALAHKYH (145 aa)). Position 44 is a phosphoserine (S44). Residue K59 is modified to N6-acetyllysine. H63 is a heme b binding site. The residue at position 82 (K82) is an N6-acetyllysine. H92 provides a ligand contact to heme b. C93 carries the post-translational modification S-nitrosocysteine. At K144 the chain carries N6-acetyllysine.

It belongs to the globin family. Heterotetramer of two alpha chains and two beta chains. In terms of tissue distribution, red blood cells.

Its function is as follows. Involved in oxygen transport from the lung to the various peripheral tissues. The protein is Hemoglobin subunit beta of Tamiasciurus hudsonicus (American red squirrel).